Consider the following 1150-residue polypeptide: Protogenin (1150 aa).

An N-terminal signal peptide occupies residues 1-35; the sequence is MAPPLRPLARLRPPGMLLRALLLLLLLSPLPGVWC. 4 consecutive Ig-like domains span residues 36–130, 135–222, 235–322, and 327–411; these read FSEL…AHLA, SAFE…ASLT, PTII…ATLT, and PSFV…ARLT. Residues 36-949 are Extracellular-facing; that stretch reads FSELSFVKEP…YYHLDQKSMT (914 aa). Disulfide bonds link Cys60–Cys113, Cys156–Cys205, Cys256–Cys304, and Cys348–Cys395. N-linked (GlcNAc...) asparagine glycosylation occurs at Asn90. Fibronectin type-III domains lie at 421-515, 517-613, 618-717, 724-817, and 822-917; these read APYN…TLED, PLRP…TPKA, APKS…VRDR, PPHH…TLPE, and PPVG…VLPK. Asn488 carries N-linked (GlcNAc...) asparagine glycosylation. N-linked (GlcNAc...) asparagine glycosylation occurs at Asn630. Residues 950–970 form a helical membrane-spanning segment; the sequence is GIAVGVGIALTCILICVLILI. Residues 971-1150 lie on the Cytoplasmic side of the membrane; sequence YRSKARKSSA…SVISTTPPNL (180 aa). Disordered stretches follow at residues 981–1002 and 1086–1150; these read SKTAQNGTQQLPRTSASLASGN and ISDE…PPNL. 2 stretches are compositionally biased toward polar residues: residues 983-1000 and 1092-1102; these read TAQNGTQQLPRTSASLAS and PSSPGQTTSFS. The span at 1110 to 1138 shows a compositional bias: basic and acidic residues; the sequence is DTEHSANSEGSHETGDSGRFSHESNDEIH. Residues 1141–1150 show a composition bias toward polar residues; sequence SVISTTPPNL.

The protein belongs to the immunoglobulin superfamily. DCC family.

It localises to the membrane. Its function is as follows. May play a role in anteroposterior axis elongation. In Homo sapiens (Human), this protein is Protogenin.